The primary structure comprises 929 residues: LPS-assembly protein LptD (929 aa).

A signal peptide spans 1-33 (MAVKSLVFRRKFPLLVTGSLLALQPVAALTVQA). A disordered region spans residues 58–101 (NLPPRPAHTATSVSTAAAGSSVSGSGGETVEAEPTQRLVTESGG). A compositionally biased stretch (low complexity) spans 66-90 (TATSVSTAAAGSSVSGSGGETVEAE).

The protein belongs to the LptD family. Component of the lipopolysaccharide transport and assembly complex. Interacts with LptE and LptA.

Its subcellular location is the cell outer membrane. Its function is as follows. Together with LptE, is involved in the assembly of lipopolysaccharide (LPS) at the surface of the outer membrane. The chain is LPS-assembly protein LptD from Pseudomonas aeruginosa (strain LESB58).